The sequence spans 23 residues: Potassium channel toxin alpha-KTx 13.3 (23 aa).

3 disulfide bridges follow: cysteine 2-cysteine 15, cysteine 5-cysteine 20, and cysteine 9-cysteine 22. Residues 13-20 (GKCINGRC) are interaction with Ca(2+)-activated K(+) channels. Position 23 is a tyrosine amide (tyrosine 23).

Expressed by the venom gland.

It is found in the secreted. Functionally, reversibly blocks Shaker B potassium channels, with a dissociation constant of 200 nM. The polypeptide is Potassium channel toxin alpha-KTx 13.3 (Tityus pachyurus (Colombian scorpion)).